We begin with the raw amino-acid sequence, 213 residues long: Uracil phosphoribosyltransferase (213 aa).

Residues Arg78, Arg103, and 130–138 (DPMLATGGS) each bind 5-phospho-alpha-D-ribose 1-diphosphate. Uracil contacts are provided by residues Ile193 and 198–200 (GDA). Asp199 lines the 5-phospho-alpha-D-ribose 1-diphosphate pocket.

This sequence belongs to the UPRTase family. It depends on Mg(2+) as a cofactor.

The catalysed reaction is UMP + diphosphate = 5-phospho-alpha-D-ribose 1-diphosphate + uracil. It participates in pyrimidine metabolism; UMP biosynthesis via salvage pathway; UMP from uracil: step 1/1. Its activity is regulated as follows. Allosterically activated by GTP. In terms of biological role, catalyzes the conversion of uracil and 5-phospho-alpha-D-ribose 1-diphosphate (PRPP) to UMP and diphosphate. This Bordetella pertussis (strain Tohama I / ATCC BAA-589 / NCTC 13251) protein is Uracil phosphoribosyltransferase.